The sequence spans 872 residues: Protein SEY1 (872 aa).

Over 1–749 (MVANGHFAGV…KRSAIGGITQ (749 aa)) the chain is Cytoplasmic. A GB1/RHD3-type G domain is found at 49–307 (GFNYHLISVF…IPADGFAVYA (259 aa)). Position 59 to 66 (59 to 66 (GSQSTGKS)) interacts with GTP. Positions 482–504 (SNYQQELSLYQKDLENIGGQLRR) form a coiled coil. The interval 676–704 (LDKWIGHTPSSATPADEEDLTPIGGVDED) is disordered. The span at 690–704 (ADEEDLTPIGGVDED) shows a compositional bias: acidic residues. Residues 750-770 (VPLYFYGLLLALGWNEIVAVL) form a helical membrane-spanning segment. Residues 771–773 (RNP) lie on the Lumenal side of the membrane. Residues 774–794 (AYFLLLFVCAVTAYVTYQLNL) traverse the membrane as a helical segment. Residues 795–872 (WGPIIKMTEA…IDDADDDDDF (78 aa)) lie on the Cytoplasmic side of the membrane. Positions 849-872 (NRKSAGGFQNNRSHIDDADDDDDF) are disordered.

The protein belongs to the TRAFAC class dynamin-like GTPase superfamily. GB1/RHD3 GTPase family. RHD3 subfamily.

The protein localises to the endoplasmic reticulum membrane. Cooperates with the reticulon proteins and tubule-shaping DP1 family proteins to generate and maintain the structure of the tubular endoplasmic reticulum network. Has GTPase activity, which is required for its function in ER organization. The polypeptide is Protein SEY1 (Paracoccidioides brasiliensis (strain Pb18)).